The following is a 186-amino-acid chain: Testis-expressed protein 36 (186 aa).

The interval 1–52 is disordered; that stretch reads MTKGRRFNPPSDKDGRWFPHIGLTQKTPESITSATSKEPQSPHLPRQAEGKL. Residues 24-39 show a composition bias toward polar residues; that stretch reads TQKTPESITSATSKEP.

This chain is Testis-expressed protein 36 (TEX36), found in Homo sapiens (Human).